A 551-amino-acid polypeptide reads, in one-letter code: Endolytic murein transglycosylase (551 aa).

Residues Met1–Lys187 are Cytoplasmic-facing. The tract at residues Val38 to Lys180 is disordered. Low complexity-rich tracts occupy residues Pro100 to Arg110 and Gln145 to Thr157. The span at Asp159–Lys174 shows a compositional bias: basic and acidic residues. Residues Ala188 to Tyr208 form a helical membrane-spanning segment. Residues Gln209–Asn551 are Extracellular-facing.

Belongs to the transglycosylase MltG family. In terms of assembly, interacts with RodZ. Interacts with MreC in the elongasome; interaction is strongly reduced when the 90 C-terminal residues of MreC are missing. Interacts with KhpB (also called EloR/Jag) via MltG's N-terminus, suggesting the N-terminus of MltG is cytoplasmic.

The protein localises to the cell membrane. The enzyme catalyses a peptidoglycan chain = a peptidoglycan chain with N-acetyl-1,6-anhydromuramyl-[peptide] at the reducing end + a peptidoglycan chain with N-acetylglucosamine at the non-reducing end.. In terms of biological role, functions as a peptidoglycan terminase that cleaves nascent peptidoglycan strands endolytically to terminate their elongation. Functionally, mutations in this gene suppress deletion of PBP2b (penA); truncation at residue 168, undefined changes between residue Ile-447 and Ala-505, and mutation of Ala-505 suppress the penA deletion. Probably part of the elongasome which synthesizes peripheral peptidoglycan. The polypeptide is Endolytic murein transglycosylase (Streptococcus pneumoniae (strain ATCC BAA-255 / R6)).